The primary structure comprises 434 residues: Putative D-alanyl-D-alanine carboxypeptidase (434 aa).

Residues 7 to 25 (YLSLLAVSCSVSAAKYPVL) traverse the membrane as a helical; Signal-anchor segment.

The protein belongs to the peptidase S12 family. YfeW subfamily.

It localises to the cell inner membrane. It catalyses the reaction Preferential cleavage: (Ac)2-L-Lys-D-Ala-|-D-Ala. Also transpeptidation of peptidyl-alanyl moieties that are N-acyl substituents of D-alanine.. Its function is as follows. Penicillin-binding protein. Has low DD-carboxypeptidase activity. In Escherichia coli (strain K12), this protein is Putative D-alanyl-D-alanine carboxypeptidase.